A 148-amino-acid chain; its full sequence is Large-conductance mechanosensitive channel (148 aa).

2 helical membrane-spanning segments follow: residues 15–35 (LDMA…KSLV) and 84–104 (VGVF…VFLL).

It belongs to the MscL family. In terms of assembly, homopentamer.

It localises to the cell inner membrane. Functionally, channel that opens in response to stretch forces in the membrane lipid bilayer. May participate in the regulation of osmotic pressure changes within the cell. This Nitratidesulfovibrio vulgaris (strain DSM 19637 / Miyazaki F) (Desulfovibrio vulgaris) protein is Large-conductance mechanosensitive channel.